The primary structure comprises 107 residues: Late histone H2B.L4 (107 aa).

Residue Ser94 is glycosylated (O-linked (GlcNAc) serine). Lys102 is covalently cross-linked (Glycyl lysine isopeptide (Lys-Gly) (interchain with G-Cter in ubiquitin)).

This sequence belongs to the histone H2B family. As to quaternary structure, the nucleosome is a histone octamer containing two molecules each of H2A, H2B, H3 and H4 assembled in one H3-H4 heterotetramer and two H2A-H2B heterodimers. The octamer wraps approximately 147 bp of DNA. In terms of processing, monoubiquitination gives a specific tag for epigenetic transcriptional activation and is also prerequisite for histone H3 'Lys-4' and 'Lys-79' methylation. GlcNAcylation at Ser-94 promotes monoubiquitination of Lys-102. It fluctuates in response to extracellular glucose, and associates with transcribed genes.

The protein resides in the nucleus. It is found in the chromosome. Its function is as follows. Core component of nucleosome. Nucleosomes wrap and compact DNA into chromatin, limiting DNA accessibility to the cellular machineries which require DNA as a template. Histones thereby play a central role in transcription regulation, DNA repair, DNA replication and chromosomal stability. DNA accessibility is regulated via a complex set of post-translational modifications of histones, also called histone code, and nucleosome remodeling. This Strongylocentrotus purpuratus (Purple sea urchin) protein is Late histone H2B.L4.